A 1207-amino-acid chain; its full sequence is DNA-directed RNA polymerase subunit beta' (1207 aa).

Zn(2+) contacts are provided by Cys60, Cys62, Cys75, and Cys78. Mg(2+) is bound by residues Asp450, Asp452, and Asp454. Residues Cys818, Cys892, Cys899, and Cys902 each contribute to the Zn(2+) site.

It belongs to the RNA polymerase beta' chain family. The RNAP catalytic core consists of 2 alpha, 1 beta, 1 beta' and 1 omega subunit. When a sigma factor is associated with the core the holoenzyme is formed, which can initiate transcription. The cofactor is Mg(2+). Zn(2+) is required as a cofactor.

The catalysed reaction is RNA(n) + a ribonucleoside 5'-triphosphate = RNA(n+1) + diphosphate. In terms of biological role, DNA-dependent RNA polymerase catalyzes the transcription of DNA into RNA using the four ribonucleoside triphosphates as substrates. The polypeptide is DNA-directed RNA polymerase subunit beta' (Lactococcus lactis subsp. lactis (strain IL1403) (Streptococcus lactis)).